The primary structure comprises 88 residues: ATP synthase F(0) complex subunit f, mitochondrial (88 aa).

Ala2 carries the N-acetylalanine modification. Ser3 carries the post-translational modification Phosphoserine. Lys16 is subject to N6-acetyllysine. A helical transmembrane segment spans residues 62–79; that stretch reads MVLAAYVVFNYCRSYKEL.

Belongs to the ATPase F chain family. As to quaternary structure, component of the ATP synthase complex composed at least of ATP5F1A/subunit alpha, ATP5F1B/subunit beta, ATP5MC1/subunit c (homooctomer), MT-ATP6/subunit a, MT-ATP8/subunit 8, ATP5ME/subunit e, ATP5MF/subunit f, ATP5MG/subunit g, ATP5MK/subunit k, ATP5MJ/subunit j, ATP5F1C/subunit gamma, ATP5F1D/subunit delta, ATP5F1E/subunit epsilon, ATP5PF/subunit F6, ATP5PB/subunit b, ATP5PD/subunit d, ATP5PO/subunit OSCP. ATP synthase complex consists of a soluble F(1) head domain (subunits alpha(3) and beta(3)) - the catalytic core - and a membrane F(0) domain - the membrane proton channel (subunits c, a, 8, e, f, g, k and j). These two domains are linked by a central stalk (subunits gamma, delta, and epsilon) rotating inside the F1 region and a stationary peripheral stalk (subunits F6, b, d, and OSCP).

The protein resides in the mitochondrion. It localises to the mitochondrion inner membrane. Its function is as follows. Subunit f, of the mitochondrial membrane ATP synthase complex (F(1)F(0) ATP synthase or Complex V) that produces ATP from ADP in the presence of a proton gradient across the membrane which is generated by electron transport complexes of the respiratory chain. ATP synthase complex consist of a soluble F(1) head domain - the catalytic core - and a membrane F(1) domain - the membrane proton channel. These two domains are linked by a central stalk rotating inside the F(1) region and a stationary peripheral stalk. During catalysis, ATP synthesis in the catalytic domain of F(1) is coupled via a rotary mechanism of the central stalk subunits to proton translocation. In vivo, can only synthesize ATP although its ATP hydrolase activity can be activated artificially in vitro. Part of the complex F(0) domain. This chain is ATP synthase F(0) complex subunit f, mitochondrial, found in Sus scrofa (Pig).